The chain runs to 600 residues: Xylulose kinase (600 aa).

79–82 (WLEA) provides a ligand contact to substrate. S244 carries the post-translational modification Phosphoserine. Position 299 (D299) interacts with substrate. Residues G358 and 505 to 509 (GASKN) each bind ATP.

Belongs to the FGGY kinase family.

The protein resides in the cytoplasm. It carries out the reaction D-xylulose + ATP = D-xylulose 5-phosphate + ADP + H(+). Its function is as follows. Xylulose kinase necessary for growth in culture media with D-xylulose as the solecarbon source. This Saccharomyces cerevisiae (strain ATCC 204508 / S288c) (Baker's yeast) protein is Xylulose kinase.